Consider the following 396-residue polypeptide: Acetate kinase (396 aa).

Asparagine 8 lines the Mg(2+) pocket. Lysine 15 serves as a coordination point for ATP. Arginine 90 serves as a coordination point for substrate. Aspartate 147 functions as the Proton donor/acceptor in the catalytic mechanism. Residues 207 to 211, 283 to 285, and 330 to 334 each bind ATP; these read HLGSG, DMR, and GIGEN. Glutamate 384 is a binding site for Mg(2+).

The protein belongs to the acetokinase family. In terms of assembly, homodimer. The cofactor is Mg(2+). Mn(2+) is required as a cofactor.

The protein localises to the cytoplasm. It carries out the reaction acetate + ATP = acetyl phosphate + ADP. It functions in the pathway metabolic intermediate biosynthesis; acetyl-CoA biosynthesis; acetyl-CoA from acetate: step 1/2. Catalyzes the formation of acetyl phosphate from acetate and ATP. Can also catalyze the reverse reaction. The chain is Acetate kinase from Lacticaseibacillus paracasei (strain ATCC 334 / BCRC 17002 / CCUG 31169 / CIP 107868 / KCTC 3260 / NRRL B-441) (Lactobacillus paracasei).